The chain runs to 277 residues: NH(3)-dependent NAD(+) synthetase (277 aa).

An ATP-binding site is contributed by 36–43; the sequence is GLSGGIDS. Asp42 contacts Mg(2+). Arg118 lines the deamido-NAD(+) pocket. Thr138 is a binding site for ATP. Glu143 is a Mg(2+) binding site. ATP is bound by residues Lys167 and Ser189.

This sequence belongs to the NAD synthetase family. In terms of assembly, homodimer.

The enzyme catalyses deamido-NAD(+) + NH4(+) + ATP = AMP + diphosphate + NAD(+) + H(+). Its pathway is cofactor biosynthesis; NAD(+) biosynthesis; NAD(+) from deamido-NAD(+) (ammonia route): step 1/1. Catalyzes the ATP-dependent amidation of deamido-NAD to form NAD. Uses ammonia as a nitrogen source. This Chlorobaculum parvum (strain DSM 263 / NCIMB 8327) (Chlorobium vibrioforme subsp. thiosulfatophilum) protein is NH(3)-dependent NAD(+) synthetase.